A 502-amino-acid chain; its full sequence is N-sulphoglucosamine sulphohydrolase (502 aa).

The signal sequence occupies residues 1-20; sequence MSCPVPACCALLLVLGLCRA. Aspartate 31 and aspartate 32 together coordinate Ca(2+). Asparagine 41 carries an N-linked (GlcNAc...) asparagine glycan. Cysteine 70 is a binding site for Ca(2+). The active-site Nucleophile is the cysteine 70. Cysteine 70 is subject to 3-oxoalanine (Cys). Residues asparagine 142 and asparagine 151 are each glycosylated (N-linked (GlcNAc...) asparagine). A disulfide bridge links cysteine 183 with cysteine 194. The N-linked (GlcNAc...) asparagine glycan is linked to asparagine 264. Ca(2+) is bound by residues aspartate 273 and asparagine 274. Asparagine 413 carries N-linked (GlcNAc...) asparagine glycosylation. A disulfide bridge links cysteine 481 with cysteine 495.

Belongs to the sulfatase family. The cofactor is Ca(2+). The conversion to 3-oxoalanine (also known as C-formylglycine, FGly), of a serine or cysteine residue in prokaryotes and of a cysteine residue in eukaryotes, is critical for catalytic activity.

It localises to the lysosome. It catalyses the reaction N-sulfo-D-glucosamine + H2O = D-glucosamine + sulfate. In terms of biological role, catalyzes a step in lysosomal heparan sulfate degradation. This chain is N-sulphoglucosamine sulphohydrolase (SGSH), found in Homo sapiens (Human).